A 393-amino-acid chain; its full sequence is Phosphoglycerate kinase (393 aa).

Residues 21 to 23 (DIN), R36, 59 to 62 (HFGR), R114, and R147 contribute to the substrate site. Residues K197, E319, and 349 to 352 (GGDT) contribute to the ATP site.

This sequence belongs to the phosphoglycerate kinase family. Monomer.

It is found in the cytoplasm. The catalysed reaction is (2R)-3-phosphoglycerate + ATP = (2R)-3-phospho-glyceroyl phosphate + ADP. Its pathway is carbohydrate degradation; glycolysis; pyruvate from D-glyceraldehyde 3-phosphate: step 2/5. The sequence is that of Phosphoglycerate kinase from Dinoroseobacter shibae (strain DSM 16493 / NCIMB 14021 / DFL 12).